A 148-amino-acid chain; its full sequence is Deoxyuridine 5'-triphosphate nucleotidohydrolase (148 aa).

Residues 68 to 70 (RSG), Asn-81, and 85 to 87 (TID) each bind substrate.

It belongs to the dUTPase family. Requires Mg(2+) as cofactor.

The enzyme catalyses dUTP + H2O = dUMP + diphosphate + H(+). The protein operates within pyrimidine metabolism; dUMP biosynthesis; dUMP from dCTP (dUTP route): step 2/2. This enzyme is involved in nucleotide metabolism: it produces dUMP, the immediate precursor of thymidine nucleotides and it decreases the intracellular concentration of dUTP so that uracil cannot be incorporated into DNA. This Geobacter metallireducens (strain ATCC 53774 / DSM 7210 / GS-15) protein is Deoxyuridine 5'-triphosphate nucleotidohydrolase.